A 545-amino-acid chain; its full sequence is Chaperonin GroEL 2 (545 aa).

Residues 29–32, 86–90, Gly-413, 479–481, and Asp-495 each bind ATP; these read TLGP, DGTTT, and NAA.

Belongs to the chaperonin (HSP60) family. Forms a cylinder of 14 subunits composed of two heptameric rings stacked back-to-back. Interacts with the co-chaperonin GroES.

Its subcellular location is the cytoplasm. The catalysed reaction is ATP + H2O + a folded polypeptide = ADP + phosphate + an unfolded polypeptide.. Its function is as follows. Together with its co-chaperonin GroES, plays an essential role in assisting protein folding. The GroEL-GroES system forms a nano-cage that allows encapsulation of the non-native substrate proteins and provides a physical environment optimized to promote and accelerate protein folding. The protein is Chaperonin GroEL 2 of Prochlorococcus marinus (strain AS9601).